The chain runs to 309 residues: Thermolabile glutaminase (309 aa).

Substrate is bound by residues serine 64, asparagine 114, glutamate 160, asparagine 167, tyrosine 191, tyrosine 243, and valine 261.

Belongs to the glutaminase family. As to quaternary structure, homotetramer.

It carries out the reaction L-glutamine + H2O = L-glutamate + NH4(+). In Rhizobium etli (strain ATCC 51251 / DSM 11541 / JCM 21823 / NBRC 15573 / CFN 42), this protein is Thermolabile glutaminase (glsA).